The following is a 284-amino-acid chain: 2,3,4,5-tetrahydropyridine-2,6-dicarboxylate N-succinyltransferase (284 aa).

Positions 111 and 148 each coordinate substrate.

The protein belongs to the transferase hexapeptide repeat family. As to quaternary structure, homotrimer.

Its subcellular location is the cytoplasm. It carries out the reaction (S)-2,3,4,5-tetrahydrodipicolinate + succinyl-CoA + H2O = (S)-2-succinylamino-6-oxoheptanedioate + CoA. The protein operates within amino-acid biosynthesis; L-lysine biosynthesis via DAP pathway; LL-2,6-diaminopimelate from (S)-tetrahydrodipicolinate (succinylase route): step 1/3. The protein is 2,3,4,5-tetrahydropyridine-2,6-dicarboxylate N-succinyltransferase of Agrobacterium fabrum (strain C58 / ATCC 33970) (Agrobacterium tumefaciens (strain C58)).